Consider the following 135-residue polypeptide: Putative pre-16S rRNA nuclease (135 aa).

It belongs to the YqgF nuclease family.

It localises to the cytoplasm. Functionally, could be a nuclease involved in processing of the 5'-end of pre-16S rRNA. In Maridesulfovibrio salexigens (strain ATCC 14822 / DSM 2638 / NCIMB 8403 / VKM B-1763) (Desulfovibrio salexigens), this protein is Putative pre-16S rRNA nuclease.